The chain runs to 469 residues: Protein DETOXIFICATION 18 (469 aa).

12 helical membrane passes run Leu40 to Ala60, Leu73 to Leu93, Leu121 to Leu141, Ala152 to Leu172, Pro183 to Val203, Ala206 to Val226, His252 to Phe274, Leu293 to Ala313, Val344 to Phe364, Phe374 to Leu394, Leu406 to Cys426, and Trp438 to Phe458.

The protein belongs to the multi antimicrobial extrusion (MATE) (TC 2.A.66.1) family.

The protein localises to the membrane. The chain is Protein DETOXIFICATION 18 from Arabidopsis thaliana (Mouse-ear cress).